A 454-amino-acid polypeptide reads, in one-letter code: Putative KilA-N domain-containing protein L4 (454 aa).

Residues 1–12 (MPQKTSKSKSSR) show a composition bias toward basic residues. The tract at residues 1 to 159 (MPQKTSKSKS…DVPEEEYDDN (159 aa)) is disordered. Positions 14 to 64 (RYIEDSDDETRGRSRNRSIEKSRSRSLDKSQKKSRDKSLTRSRSKSPEKSK) are enriched in basic and acidic residues. The segment covering 65 to 79 (SRSKSLTRSRSKSPK) has biased composition (basic residues). 2 stretches are compositionally biased toward acidic residues: residues 98–123 (YTTEESDEESDDESDGETNEESDEEL) and 130–158 (ESDEEISEESDEEISEESDEDVPEEEYDD). Residues 172-276 (EFARGKFGDF…LKVSDIVIEY (105 aa)) form the KilA-N domain.

The chain is Putative KilA-N domain-containing protein L4 from Acanthamoeba polyphaga mimivirus (APMV).